Consider the following 351-residue polypeptide: UDP-N-acetylglucosamine--N-acetylmuramyl-(pentapeptide) pyrophosphoryl-undecaprenol N-acetylglucosamine transferase (351 aa).

UDP-N-acetyl-alpha-D-glucosamine-binding positions include 13 to 15, N125, R161, S189, I241, 260 to 265, and Q285; these read TGG and ALTVCE.

Belongs to the glycosyltransferase 28 family. MurG subfamily.

The protein resides in the cell inner membrane. The enzyme catalyses di-trans,octa-cis-undecaprenyl diphospho-N-acetyl-alpha-D-muramoyl-L-alanyl-D-glutamyl-meso-2,6-diaminopimeloyl-D-alanyl-D-alanine + UDP-N-acetyl-alpha-D-glucosamine = di-trans,octa-cis-undecaprenyl diphospho-[N-acetyl-alpha-D-glucosaminyl-(1-&gt;4)]-N-acetyl-alpha-D-muramoyl-L-alanyl-D-glutamyl-meso-2,6-diaminopimeloyl-D-alanyl-D-alanine + UDP + H(+). Its pathway is cell wall biogenesis; peptidoglycan biosynthesis. In terms of biological role, cell wall formation. Catalyzes the transfer of a GlcNAc subunit on undecaprenyl-pyrophosphoryl-MurNAc-pentapeptide (lipid intermediate I) to form undecaprenyl-pyrophosphoryl-MurNAc-(pentapeptide)GlcNAc (lipid intermediate II). In Haemophilus influenzae (strain ATCC 51907 / DSM 11121 / KW20 / Rd), this protein is UDP-N-acetylglucosamine--N-acetylmuramyl-(pentapeptide) pyrophosphoryl-undecaprenol N-acetylglucosamine transferase.